The chain runs to 438 residues: NADH-quinone oxidoreductase subunit D (438 aa).

The protein belongs to the complex I 49 kDa subunit family. In terms of assembly, NDH-1 is composed of 14 different subunits. Subunits NuoB, C, D, E, F, and G constitute the peripheral sector of the complex.

Its subcellular location is the cell membrane. The enzyme catalyses a quinone + NADH + 5 H(+)(in) = a quinol + NAD(+) + 4 H(+)(out). NDH-1 shuttles electrons from NADH, via FMN and iron-sulfur (Fe-S) centers, to quinones in the respiratory chain. The immediate electron acceptor for the enzyme in this species is believed to be a menaquinone. Couples the redox reaction to proton translocation (for every two electrons transferred, four hydrogen ions are translocated across the cytoplasmic membrane), and thus conserves the redox energy in a proton gradient. This Rhodococcus jostii (strain RHA1) protein is NADH-quinone oxidoreductase subunit D.